We begin with the raw amino-acid sequence, 284 residues long: 1D-myo-inositol 2-acetamido-2-deoxy-alpha-D-glucopyranoside deacetylase (284 aa).

Residues His12, Asp15, and His146 each coordinate Zn(2+).

The protein belongs to the MshB deacetylase family. Zn(2+) serves as cofactor.

It catalyses the reaction 1D-myo-inositol 2-acetamido-2-deoxy-alpha-D-glucopyranoside + H2O = 1D-myo-inositol 2-amino-2-deoxy-alpha-D-glucopyranoside + acetate. Its function is as follows. Catalyzes the deacetylation of 1D-myo-inositol 2-acetamido-2-deoxy-alpha-D-glucopyranoside (GlcNAc-Ins) in the mycothiol biosynthesis pathway. The sequence is that of 1D-myo-inositol 2-acetamido-2-deoxy-alpha-D-glucopyranoside deacetylase from Mycolicibacterium vanbaalenii (strain DSM 7251 / JCM 13017 / BCRC 16820 / KCTC 9966 / NRRL B-24157 / PYR-1) (Mycobacterium vanbaalenii).